Reading from the N-terminus, the 169-residue chain is Protein-export protein SecB (169 aa).

It belongs to the SecB family. In terms of assembly, homotetramer, a dimer of dimers. One homotetramer interacts with 1 SecA dimer.

Its subcellular location is the cytoplasm. Functionally, one of the proteins required for the normal export of preproteins out of the cell cytoplasm. It is a molecular chaperone that binds to a subset of precursor proteins, maintaining them in a translocation-competent state. It also specifically binds to its receptor SecA. The protein is Protein-export protein SecB of Mannheimia succiniciproducens (strain KCTC 0769BP / MBEL55E).